Reading from the N-terminus, the 284-residue chain is Bifunctional protein FolD (284 aa).

NADP(+) is bound by residues 166–168 and I232; that span reads GAS.

This sequence belongs to the tetrahydrofolate dehydrogenase/cyclohydrolase family. Homodimer.

It carries out the reaction (6R)-5,10-methylene-5,6,7,8-tetrahydrofolate + NADP(+) = (6R)-5,10-methenyltetrahydrofolate + NADPH. It catalyses the reaction (6R)-5,10-methenyltetrahydrofolate + H2O = (6R)-10-formyltetrahydrofolate + H(+). It functions in the pathway one-carbon metabolism; tetrahydrofolate interconversion. Functionally, catalyzes the oxidation of 5,10-methylenetetrahydrofolate to 5,10-methenyltetrahydrofolate and then the hydrolysis of 5,10-methenyltetrahydrofolate to 10-formyltetrahydrofolate. The chain is Bifunctional protein FolD from Shewanella oneidensis (strain ATCC 700550 / JCM 31522 / CIP 106686 / LMG 19005 / NCIMB 14063 / MR-1).